The primary structure comprises 116 residues: UPF0342 protein LBA1592 (116 aa).

The protein belongs to the UPF0342 family.

This chain is UPF0342 protein LBA1592, found in Lactobacillus acidophilus (strain ATCC 700396 / NCK56 / N2 / NCFM).